The following is an 86-amino-acid chain: Small ribosomal subunit protein bS16 (86 aa).

The protein belongs to the bacterial ribosomal protein bS16 family.

This is Small ribosomal subunit protein bS16 from Syntrophotalea carbinolica (strain DSM 2380 / NBRC 103641 / GraBd1) (Pelobacter carbinolicus).